The primary structure comprises 291 residues: Phosphatidylglycerol--prolipoprotein diacylglyceryl transferase (291 aa).

A run of 7 helical transmembrane segments spans residues 21-41, 60-80, 96-116, 130-150, 198-218, 225-245, and 260-280; these read VSLH…MWLA, LLYA…VLFY, WDGG…MIIF, FIAP…FING, SQLY…NLFI, GSVS…VEFF, and ISMG…MMVW. A 1,2-diacyl-sn-glycero-3-phospho-(1'-sn-glycerol) is bound at residue R143.

Belongs to the Lgt family.

It localises to the cell inner membrane. The enzyme catalyses L-cysteinyl-[prolipoprotein] + a 1,2-diacyl-sn-glycero-3-phospho-(1'-sn-glycerol) = an S-1,2-diacyl-sn-glyceryl-L-cysteinyl-[prolipoprotein] + sn-glycerol 1-phosphate + H(+). It functions in the pathway protein modification; lipoprotein biosynthesis (diacylglyceryl transfer). In terms of biological role, catalyzes the transfer of the diacylglyceryl group from phosphatidylglycerol to the sulfhydryl group of the N-terminal cysteine of a prolipoprotein, the first step in the formation of mature lipoproteins. This chain is Phosphatidylglycerol--prolipoprotein diacylglyceryl transferase, found in Klebsiella pneumoniae (strain 342).